The following is a 168-amino-acid chain: ATP synthase subunit b (168 aa).

The chain crosses the membrane as a helical span at residues 10–30; that stretch reads STILGNFILVTASFAVLIILI.

Belongs to the ATPase B chain family. In terms of assembly, F-type ATPases have 2 components, F(1) - the catalytic core - and F(0) - the membrane proton channel. F(1) has five subunits: alpha(3), beta(3), gamma(1), delta(1), epsilon(1). F(0) has three main subunits: a(1), b(2) and c(10-14). The alpha and beta chains form an alternating ring which encloses part of the gamma chain. F(1) is attached to F(0) by a central stalk formed by the gamma and epsilon chains, while a peripheral stalk is formed by the delta and b chains.

The protein localises to the cell membrane. Its function is as follows. F(1)F(0) ATP synthase produces ATP from ADP in the presence of a proton or sodium gradient. F-type ATPases consist of two structural domains, F(1) containing the extramembraneous catalytic core and F(0) containing the membrane proton channel, linked together by a central stalk and a peripheral stalk. During catalysis, ATP synthesis in the catalytic domain of F(1) is coupled via a rotary mechanism of the central stalk subunits to proton translocation. In terms of biological role, component of the F(0) channel, it forms part of the peripheral stalk, linking F(1) to F(0). This Streptococcus suis (strain 98HAH33) protein is ATP synthase subunit b.